We begin with the raw amino-acid sequence, 120 residues long: MEYVFVYGSLRKGFWNHEPYLKNSKFIGKGKTKEKYAMYVNIIPYVVENEKISHIVGEVYEVDEKTLKRIDCLEGHPDYYRRKKVSIILDSGKEIEAWLYFYPESCGILVESGDYKDYRG.

7–10 (YGSL) lines the substrate pocket. Glu-74 functions as the Proton acceptor in the catalytic mechanism.

The protein belongs to the gamma-glutamylcyclotransferase family.

Functionally, putative gamma-glutamylcyclotransferase. The polypeptide is Putative gamma-glutamylcyclotransferase MJ1514 (Methanocaldococcus jannaschii (strain ATCC 43067 / DSM 2661 / JAL-1 / JCM 10045 / NBRC 100440) (Methanococcus jannaschii)).